The primary structure comprises 659 residues: Nicastrin (659 aa).

Residues 1-22 form the signal peptide; that stretch reads MKIKNYFIIVFIIIVLSTDVIS. The Extracellular portion of the chain corresponds to 23–627; sequence SQSSIEDKMY…LFQVGSYANE (605 aa). N-linked (GlcNAc...) asparagine glycosylation is found at Asn-94, Asn-172, Asn-305, Asn-389, Asn-451, Asn-475, Asn-550, Asn-553, and Asn-600. Residues 628 to 648 traverse the membrane as a helical segment; that stretch reads IWFLVSGLIELLLSVGIIFYI. Topologically, residues 649 to 659 are cytoplasmic; the sequence is KKYLSKRYKLL.

It belongs to the nicastrin family. In terms of assembly, homodimer. Component of the gamma-secretase complex, a complex composed of a presenilin homodimer, nicastrin, aph1 and pen2.

It localises to the membrane. Its function is as follows. Essential subunit of the gamma-secretase complex, an endoprotease complex that catalyzes the intramembrane cleavage of integral membrane proteins such as Notch receptors and APP (amyloid-beta precursor protein). It probably represents a stabilizing cofactor required for the assembly of the gamma-secretase complex. The chain is Nicastrin (ncstn) from Dictyostelium discoideum (Social amoeba).